Reading from the N-terminus, the 1077-residue chain is Semaphorin-5A (1077 aa).

The signal sequence occupies residues 1-21; that stretch reads MKGACILAWLFSSLGVWRLAR. The Extracellular portion of the chain corresponds to 22 to 971; that stretch reads PETQDPAKCQ…RCGEFNMFHM (950 aa). The Sema domain occupies 35 to 484; sequence HPVVSYKEIG…LQEHVAKIPL (450 aa). 2 disulfide bridges follow: Cys104–Cys114 and Cys131–Cys140. N-linked (GlcNAc...) asparagine glycans are attached at residues Asn147, Asn168, Asn227, and Asn277. 2 disulfide bridges follow: Cys254-Cys357 and Cys278-Cys320. 2 N-linked (GlcNAc...) asparagine glycosylation sites follow: Asn323 and Asn367. Intrachain disulfides connect Cys487–Cys504 and Cys496–Cys513. Residues Asn536 and Asn591 are each glycosylated (N-linked (GlcNAc...) asparagine). 7 TSP type-1 domains span residues 540–593, 595–651, 653–702, 707–765, 784–839, 841–896, and 897–944; these read DGSF…TNCS, NGGW…LLCP, HVFW…NACP, TTPW…GCST, NGAW…LPCP, DGVW…QTCP, and ESWS…VFDS. 6 disulfide bridges follow: Cys607–Cys644, Cys611–Cys650, Cys622–Cys634, Cys665–Cys696, Cys669–Cys701, and Cys680–Cys686. The N-linked (GlcNAc...) asparagine glycan is linked to Asn717. Intrachain disulfides connect Cys796–Cys833, Cys800–Cys838, Cys811–Cys823, Cys853–Cys890, Cys857–Cys895, and Cys868–Cys880. N-linked (GlcNAc...) asparagine glycosylation occurs at Asn933. Residues 972–992 form a helical membrane-spanning segment; the sequence is FHMMAVGLSSSILGCLLTLLV. The Cytoplasmic portion of the chain corresponds to 993 to 1077; the sequence is YTYCQRYQQQ…FTDLNNYDEY (85 aa).

The protein belongs to the semaphorin family. As to quaternary structure, binds PLXNB3. As to expression, in adult, detected in liver, brain, kidney, heart, lung and spleen.

Its subcellular location is the membrane. In terms of biological role, bifunctional axonal guidance cue regulated by sulfated proteoglycans; attractive effects result from interactions with heparan sulfate proteoglycans (HSPGs), while the inhibitory effects depend on interactions with chondroitin sulfate proteoglycans (CSPGs). Ligand for receptor PLXNB3. In glioma cells, SEMA5A stimulation of PLXNB3 results in the disassembly of F-actin stress fibers, disruption of focal adhesions and cellular collapse as well as inhibition of cell migration and invasion through ARHGDIA-mediated inactivation of RAC1. May promote angiogenesis by increasing endothelial cell proliferation and migration and inhibiting apoptosis. The protein is Semaphorin-5A (Sema5a) of Mus musculus (Mouse).